Here is a 187-residue protein sequence, read N- to C-terminus: UPF0340 protein str1894 (187 aa).

Belongs to the UPF0340 family.

This is UPF0340 protein str1894 from Streptococcus thermophilus (strain CNRZ 1066).